The sequence spans 748 residues: Cytosolic phospholipase A2 (748 aa).

The tract at residues 1–178 is phospholipid binding; the sequence is MSFIDPYQHI…MKSFLGEENS (178 aa). Positions 6–124 constitute a C2 domain; sequence PYQHIVVEHQ…GEKKEVQLTF (119 aa). The Ca(2+) site is built by D40, T41, D43, N65, D93, A94, and N95. Residues 138–740 form the PLA2c domain; that stretch reads VCSSTDLRFS…SSVEARRFFN (603 aa). S228 functions as the Nucleophile in the catalytic mechanism. The tract at residues 431 to 459 is disordered; the sequence is SNDSSDSEDESQHPKGTENSEANEEYQNS. Positions 449–459 are enriched in polar residues; it reads NSEANEEYQNS. At S505 the chain carries Phosphoserine; by MAPK. D549 acts as the Proton acceptor in catalysis.

In terms of processing, activated by phosphorylation on a serine residue.

The protein resides in the cytoplasm. Its subcellular location is the cytoplasmic vesicle. It carries out the reaction a 1,2-diacyl-sn-glycero-3-phosphocholine + H2O = a 1-acyl-sn-glycero-3-phosphocholine + a fatty acid + H(+). It catalyses the reaction a 1-acyl-sn-glycero-3-phosphocholine + H2O = sn-glycerol 3-phosphocholine + a fatty acid + H(+). Stimulated by agonists such as ATP, EGF, thrombin and bradykinin as well as by cytosolic Ca(2+). In terms of biological role, selectively hydrolyzes arachidonyl phospholipids in the sn-2 position releasing arachidonic acid. Together with its lysophospholipid activity, it is implicated in the initiation of the inflammatory response. This Gallus gallus (Chicken) protein is Cytosolic phospholipase A2 (PLA2G4A).